A 237-amino-acid chain; its full sequence is MTRGEMKYEGKAKRVYATEQAGEYIVEYKDDATAFNGVKKAQIMGKGEINNAITAHLYPLLEAAGIPTHFLEKLSDREQRVRAVTIVPVEIIVRNVAAGSFSKRLGIEEGTPLPRPVVEYCYKSDALGDPLINTDTAVALGWATEADLARIRELSLQVRDFLVPYFEARGVRLVDFKLEFGKLSSGEIVLADEISPDTCRFWDAQTNEKMDKDRFRRDLGGVEDAYAEMLRRVTQSV.

This sequence belongs to the SAICAR synthetase family.

The catalysed reaction is 5-amino-1-(5-phospho-D-ribosyl)imidazole-4-carboxylate + L-aspartate + ATP = (2S)-2-[5-amino-1-(5-phospho-beta-D-ribosyl)imidazole-4-carboxamido]succinate + ADP + phosphate + 2 H(+). The protein operates within purine metabolism; IMP biosynthesis via de novo pathway; 5-amino-1-(5-phospho-D-ribosyl)imidazole-4-carboxamide from 5-amino-1-(5-phospho-D-ribosyl)imidazole-4-carboxylate: step 1/2. The chain is Phosphoribosylaminoimidazole-succinocarboxamide synthase from Deinococcus deserti (strain DSM 17065 / CIP 109153 / LMG 22923 / VCD115).